The following is a 637-amino-acid chain: Extracellular metalloproteinase 2 (637 aa).

Residues 1 to 20 form the signal peptide; that stretch reads MRSFLLASLASVATLKSAQA. A propeptide spanning residues 21–244 is cleaved from the precursor; the sequence is HPAHSTRGLS…VHAVVDYSAD (224 aa). N-linked (GlcNAc...) asparagine glycans are attached at residues Asn-302, Asn-328, Asn-337, and Asn-413. His-430 contacts Zn(2+). The active site involves Glu-431. His-434 provides a ligand contact to Zn(2+).

Belongs to the peptidase M36 family. Requires Zn(2+) as cofactor.

It is found in the secreted. Functionally, secreted metalloproteinase that allows assimilation of proteinaceous substrates. The chain is Extracellular metalloproteinase 2 (MEP2) from Phaeosphaeria nodorum (strain SN15 / ATCC MYA-4574 / FGSC 10173) (Glume blotch fungus).